The primary structure comprises 203 residues: MKVVAFERSVQGTGASRRLRNSGKTPGIIYGGAAEPKMIELDHNALWHALKKEAFHSSILDLEVAGKSEKALLRAFQMHPFKPLVLHVDFQRVSATEKIHVKVPLHFMNQETAPGVKLGHGIVSHILNDLEVSCLPADLPEFIEVDLAAAELNQTIHLSDLKLPKGVTAITHGDENPAIASITLPAGAQSSEAAEGGEETPAA.

It belongs to the bacterial ribosomal protein bL25 family. CTC subfamily. In terms of assembly, part of the 50S ribosomal subunit; part of the 5S rRNA/L5/L18/L25 subcomplex. Contacts the 5S rRNA. Binds to the 5S rRNA independently of L5 and L18.

Its function is as follows. This is one of the proteins that binds to the 5S RNA in the ribosome where it forms part of the central protuberance. This Cupriavidus metallidurans (strain ATCC 43123 / DSM 2839 / NBRC 102507 / CH34) (Ralstonia metallidurans) protein is Large ribosomal subunit protein bL25.